Here is a 275-residue protein sequence, read N- to C-terminus: Putative protein A464R (275 aa).

Positions 51–175 (KEDVEYLIGM…LMGAIYFDLG (125 aa)) constitute an RNase III domain. The DRBM domain maps to 201-269 (NYKDRLLKHT…SKIALHTMGV (69 aa)).

This sequence belongs to the ribonuclease III family.

This Chlorella (PBCV-1) protein is Putative protein A464R.